The chain runs to 204 residues: UPF0637 protein SAB0972c (204 aa).

It belongs to the UPF0637 family.

This chain is UPF0637 protein SAB0972c, found in Staphylococcus aureus (strain bovine RF122 / ET3-1).